The following is a 530-amino-acid chain: NMDA receptor synaptonuclear signaling and neuronal migration factor (530 aa).

The N-myristoyl glycine moiety is linked to residue Gly2. Residues 2 to 233 (GAAASRRRAL…FSFQTATTTM (232 aa)) are necessary and sufficient to elicit dendritic processes and synaptic contacts. 2 disordered regions span residues 34–67 (SQSH…APQN) and 125–197 (KGRR…GRRK). The span at 38–48 (PENRNGADHLL) shows a compositional bias: basic and acidic residues. Basic residues predominate over residues 125–137 (KGRRQRHPHHHSQ). The segment covering 153-162 (PCQSWAGSRQ) has biased composition (polar residues). Ser204 is subject to Phosphoserine. A Nuclear localization signal motif is present at residues 247-250 (RRKR). The interval 285–312 (RSFSRSWSDPTPMKADTSHDSRDSSDLQ) is disordered. 2 positions are modified to phosphoserine: Ser290 and Ser292. Residues 300-309 (DTSHDSRDSS) are compositionally biased toward basic and acidic residues.

Belongs to the NSMF family. In terms of assembly, interacts with KPNA1; the interaction occurs in a calcium-independent manner after synaptic NMDA receptor stimulation and is required for nuclear import of NSMF but is competed by CABP1. Interacts (via the central NLS-containing motif region) with CABP1 (via EF-hands 1 and 2); the interaction occurs in a calcium-dependent manner after synaptic NMDA receptor stimulation and prevents the nuclear import of NSMF. Cannot be competed by calmodulin. Post-translationally, proteolytically processed after NMDA receptor activation. Cleaved in a calcium-dependent and calpain-sensitive manner. Calpain cleavage is essential for the translocation process from dendrites to the nucleus. Highly expressed in adult and fetal brain. Weakly expressed in heart, liver, spleen, testis, small intestine, skeletal muscle, peripheral white blood cells and kidney.

Its subcellular location is the nucleus. It is found in the nucleus envelope. It localises to the nucleus membrane. The protein resides in the nucleus matrix. The protein localises to the cytoplasm. Its subcellular location is the cell cortex. It is found in the cytoskeleton. It localises to the cell membrane. The protein resides in the cell projection. The protein localises to the dendrite. Its subcellular location is the synapse. It is found in the synaptosome. It localises to the postsynaptic density. The protein resides in the membrane. Couples NMDA-sensitive glutamate receptor signaling to the nucleus and triggers long-lasting changes in the cytoarchitecture of dendrites and spine synapse processes. Part of the cAMP response element-binding protein (CREB) shut-off signaling pathway. Stimulates outgrowth of olfactory axons and migration of gonadotropin-releasing hormone (GnRH) and luteinizing-hormone-releasing hormone (LHRH) neuronal cells. The sequence is that of NMDA receptor synaptonuclear signaling and neuronal migration factor (NSMF) from Homo sapiens (Human).